The primary structure comprises 845 residues: SLIT and NTRK-like protein 2 (845 aa).

An N-terminal signal peptide occupies residues 1 to 21 (MLSGVWFLSVLTVAGILQTES). Residues 22–621 (RKTAKDICKI…LHTEVPLSVL (600 aa)) lie on the Extracellular side of the membrane. 2 disulfides stabilise this stretch: Cys29–Cys35 and Cys33–Cys46. LRR repeat units follow at residues 63 to 84 (RIYQ…EFVN), 87 to 108 (NAVT…AFSG), 111 to 132 (TLKR…TFLG), 135 to 156 (SLEY…AFSK), 159 to 180 (KLKV…VFRF), and 182 to 203 (LLTH…GVLE). N-linked (GlcNAc...) asparagine glycosylation is present at Asn84. Residues 167-215 (DNLLLSLPSNVFRFVLLTHLDLRGNRLKVMPFAGVLEHIGGIMEIQLEE) form a required for interaction with PTPRD region. The LRRCT 1 domain maps to 216 to 265 (NPWNCTCDLLPLKAWLDTITVFVGEIVCETPFRLHGKDVTQLTRQDLCPR). Cystine bridges form between Cys220-Cys243 and Cys222-Cys263. Residues 263 to 321 (CPRKSASDSSQRGSHADTHVQRLSPTMNPALNPTRAPKASRPPKMRNRPTPRVTVSKDR) are disordered. The segment covering 283 to 293 (QRLSPTMNPAL) has biased composition (polar residues). An LRRNT domain is found at 331–373 (QTKSPVPLTCPSSCVCTSQSSDNGLNVNCQERKFTNISDLQPK). LRR repeat units lie at residues 376 to 397 (SPKK…DLLE), 400 to 421 (SLDL…AFTN), 424 to 445 (SLRR…MFDG), 448 to 469 (SLQY…TFDA), 472 to 493 (NLQL…IFGG), and 495 to 516 (ALTR…GVLD). Asn421 is a glycosylation site (N-linked (GlcNAc...) asparagine). Residues 529 to 580 (NPWDCTCDIMGLKDWTEHANSPVIINEVTCESPAKHAGEILKFLGREAICPD) enclose the LRRCT 2 domain. Residues 622 to 642 (ILGLLVVFILSVCFGAGLFVF) form a helical membrane-spanning segment. Over 643–845 (VLKRRKGVPS…LEKQTAISQL (203 aa)) the chain is Cytoplasmic. Tyr756 carries the phosphotyrosine modification.

The protein belongs to the SLITRK family. As to quaternary structure, interacts with PTPRD; this interaction is PTPRD splicing-dependent and may induce pre-synaptic differentiation. Interacts with NTRK2. Expressed predominantly in the cerebral cortex of the brain but also at low levels in the spinal cord and medulla. Also expressed in some astrocytic brain tumors such as astrocytomas, oligodendrogliomas, glioblastomas, gangliogliomas and primitive neuroectodermal tumors.

The protein resides in the membrane. It localises to the cell membrane. It is found in the cell projection. The protein localises to the dendrite. It is involved in synaptogenesis and promotes excitatory synapse differentiation. Suppresses neurite outgrowth. Involved in the negative regulation of NTRK2. This is SLIT and NTRK-like protein 2 (SLITRK2) from Homo sapiens (Human).